The chain runs to 506 residues: Cysteine--tRNA ligase (506 aa).

Cys34 contributes to the Zn(2+) binding site. Positions 36 to 46 (PTVYDFAHIGN) match the 'HIGH' region motif. Residues Cys230, His269, and Glu273 each coordinate Zn(2+). The short motif at 302–306 (KMSKS) is the 'KMSKS' region element. Lys305 is a binding site for ATP.

The protein belongs to the class-I aminoacyl-tRNA synthetase family. In terms of assembly, monomer. The cofactor is Zn(2+).

It localises to the cytoplasm. It carries out the reaction tRNA(Cys) + L-cysteine + ATP = L-cysteinyl-tRNA(Cys) + AMP + diphosphate. This is Cysteine--tRNA ligase from Brucella suis biovar 1 (strain 1330).